We begin with the raw amino-acid sequence, 179 residues long: Large ribosomal subunit protein uL6 (179 aa).

Belongs to the universal ribosomal protein uL6 family. Part of the 50S ribosomal subunit.

Its function is as follows. This protein binds to the 23S rRNA, and is important in its secondary structure. It is located near the subunit interface in the base of the L7/L12 stalk, and near the tRNA binding site of the peptidyltransferase center. The polypeptide is Large ribosomal subunit protein uL6 (Pelobacter propionicus (strain DSM 2379 / NBRC 103807 / OttBd1)).